The primary structure comprises 852 residues: Bifunctional uridylyltransferase/uridylyl-removing enzyme (852 aa).

Residues 1–318 (MPENLSSALE…STPMRVTLRI (318 aa)) form a uridylyltransferase region. Positions 319 to 672 (DDDYIQVNNQ…SRILPQSDSF (354 aa)) are uridylyl-removing. The 123-residue stretch at 436 to 558 (VDDHILAVVR…VQTHERLSAL (123 aa)) folds into the HD domain. 2 consecutive ACT domains span residues 673–757 (QVMV…SCNR) and 785–852 (SVEI…EQLA).

This sequence belongs to the GlnD family. The cofactor is Mg(2+).

It catalyses the reaction [protein-PII]-L-tyrosine + UTP = [protein-PII]-uridylyl-L-tyrosine + diphosphate. It carries out the reaction [protein-PII]-uridylyl-L-tyrosine + H2O = [protein-PII]-L-tyrosine + UMP + H(+). Its activity is regulated as follows. Uridylyltransferase (UTase) activity is inhibited by glutamine, while glutamine activates uridylyl-removing (UR) activity. Modifies, by uridylylation and deuridylylation, the PII regulatory proteins (GlnB and homologs), in response to the nitrogen status of the cell that GlnD senses through the glutamine level. Under low glutamine levels, catalyzes the conversion of the PII proteins and UTP to PII-UMP and PPi, while under higher glutamine levels, GlnD hydrolyzes PII-UMP to PII and UMP (deuridylylation). Thus, controls uridylylation state and activity of the PII proteins, and plays an important role in the regulation of nitrogen assimilation and metabolism. The protein is Bifunctional uridylyltransferase/uridylyl-removing enzyme of Neisseria gonorrhoeae (strain NCCP11945).